The following is a 186-amino-acid chain: Potassium-transporting ATPase KdpC subunit (186 aa).

A helical transmembrane segment spans residues 10–30 (LTIITMVLCGFLFPLAITLIG).

It belongs to the KdpC family. In terms of assembly, the system is composed of three essential subunits: KdpA, KdpB and KdpC.

Its subcellular location is the cell membrane. In terms of biological role, part of the high-affinity ATP-driven potassium transport (or Kdp) system, which catalyzes the hydrolysis of ATP coupled with the electrogenic transport of potassium into the cytoplasm. This subunit acts as a catalytic chaperone that increases the ATP-binding affinity of the ATP-hydrolyzing subunit KdpB by the formation of a transient KdpB/KdpC/ATP ternary complex. The protein is Potassium-transporting ATPase KdpC subunit of Staphylococcus aureus (strain COL).